The sequence spans 174 residues: Large ribosomal subunit protein uL18 (174 aa).

The protein belongs to the universal ribosomal protein uL18 family. Part of the 50S ribosomal subunit. Contacts the 5S and 23S rRNAs.

Functionally, this is one of the proteins that bind and probably mediate the attachment of the 5S RNA into the large ribosomal subunit, where it forms part of the central protuberance. In Methanosarcina barkeri (strain Fusaro / DSM 804), this protein is Large ribosomal subunit protein uL18.